Here is a 491-residue protein sequence, read N- to C-terminus: MANYFNTLNLRQQLAQLGKCRFMGRDEFADGASYLQGKKVVIVGCGAQGLNQGLNMRDSGLDISYALRKEAIAEKRASWRKATENGFKVGTYEELIPQADLVVNLTPDKQHSDVVRSVQPLMKDGAALGYSHGFNIVEVGEQIRKDITVVMVAPKCPGTEVREEYKRGFGVPTLIAVHPENDPKGEGMAIAKAWAAATGGHRAGVLESSFVAEVKSDLMGEQTILCGMLQAGSLLCFDKLVAEGTDPAYAEKLIQFGWETITEALKQGGITLMMDRLSNPAKLRAYALSEQLKEIMAPLFQKHMDDIISGEFSSGMMADWANDDKKLLTWREETGKTAFETAPQFEGKIGEQEYFDKGVLMIAMVKAGVELAFETMVDSGIIEESAYYESLHELPLIANTIARKRLYEMNVVISDTAEYGNYLFSYACVPLLKPFIAELQPGDLGSAIPEGAVDNAQLRDVNDAIRSHAIEQVGKKLRGYMTDMKRIAVAG.

The KARI N-terminal Rossmann domain maps to 15–208 (AQLGKCRFMG…GGHRAGVLES (194 aa)). NADP(+)-binding positions include 45–48 (CGAQ), Arg68, Arg76, Ser78, and 108–110 (DKQ). His132 is an active-site residue. An NADP(+)-binding site is contributed by Gly158. 2 consecutive KARI C-terminal knotted domains span residues 209–344 (SFVA…TAPQ) and 345–484 (FEGK…MTDM). Positions 217, 221, 389, and 393 each coordinate Mg(2+). Position 414 (Ser414) interacts with substrate.

It belongs to the ketol-acid reductoisomerase family. It depends on Mg(2+) as a cofactor.

The catalysed reaction is (2R)-2,3-dihydroxy-3-methylbutanoate + NADP(+) = (2S)-2-acetolactate + NADPH + H(+). The enzyme catalyses (2R,3R)-2,3-dihydroxy-3-methylpentanoate + NADP(+) = (S)-2-ethyl-2-hydroxy-3-oxobutanoate + NADPH + H(+). The protein operates within amino-acid biosynthesis; L-isoleucine biosynthesis; L-isoleucine from 2-oxobutanoate: step 2/4. Its pathway is amino-acid biosynthesis; L-valine biosynthesis; L-valine from pyruvate: step 2/4. Functionally, involved in the biosynthesis of branched-chain amino acids (BCAA). Catalyzes an alkyl-migration followed by a ketol-acid reduction of (S)-2-acetolactate (S2AL) to yield (R)-2,3-dihydroxy-isovalerate. In the isomerase reaction, S2AL is rearranged via a Mg-dependent methyl migration to produce 3-hydroxy-3-methyl-2-ketobutyrate (HMKB). In the reductase reaction, this 2-ketoacid undergoes a metal-dependent reduction by NADPH to yield (R)-2,3-dihydroxy-isovalerate. The protein is Ketol-acid reductoisomerase (NADP(+)) of Salmonella agona (strain SL483).